Reading from the N-terminus, the 714-residue chain is Polyribonucleotide nucleotidyltransferase (714 aa).

Residues D490 and D496 each coordinate Mg(2+). The KH domain occupies 556 to 615 (PRIETMQIPTDKIREVIGSGGKVIREIVEVSGAKVDINDDGIIKIASPNGDSIKKAYDMI). The S1 motif domain occupies 625-693 (GQVYTGKVVK…DRGKVRLSMK (69 aa)).

This sequence belongs to the polyribonucleotide nucleotidyltransferase family. Requires Mg(2+) as cofactor.

It localises to the cytoplasm. It carries out the reaction RNA(n+1) + phosphate = RNA(n) + a ribonucleoside 5'-diphosphate. In terms of biological role, involved in mRNA degradation. Catalyzes the phosphorolysis of single-stranded polyribonucleotides processively in the 3'- to 5'-direction. The protein is Polyribonucleotide nucleotidyltransferase of Ruegeria pomeroyi (strain ATCC 700808 / DSM 15171 / DSS-3) (Silicibacter pomeroyi).